The following is an 89-amino-acid chain: Small ribosomal subunit protein uS15 (89 aa).

Belongs to the universal ribosomal protein uS15 family. Part of the 30S ribosomal subunit. Forms a bridge to the 50S subunit in the 70S ribosome, contacting the 23S rRNA.

In terms of biological role, one of the primary rRNA binding proteins, it binds directly to 16S rRNA where it helps nucleate assembly of the platform of the 30S subunit by binding and bridging several RNA helices of the 16S rRNA. Its function is as follows. Forms an intersubunit bridge (bridge B4) with the 23S rRNA of the 50S subunit in the ribosome. In Klebsiella pneumoniae subsp. pneumoniae (strain ATCC 700721 / MGH 78578), this protein is Small ribosomal subunit protein uS15.